The primary structure comprises 209 residues: UPF0502 protein mll4256 (209 aa).

The protein belongs to the UPF0502 family.

In Mesorhizobium japonicum (strain LMG 29417 / CECT 9101 / MAFF 303099) (Mesorhizobium loti (strain MAFF 303099)), this protein is UPF0502 protein mll4256.